The sequence spans 248 residues: uncharacterized protein (248 aa).

9-33 (IITGASSGIGEATAILLAEKGAKLV) contributes to the NADP(+) binding site. Residue Ser141 coordinates substrate. The Proton acceptor role is filled by Tyr154.

It belongs to the short-chain dehydrogenases/reductases (SDR) family.

This is an uncharacterized protein from Listeria innocua serovar 6a (strain ATCC BAA-680 / CLIP 11262).